Consider the following 151-residue polypeptide: C-C motif chemokine 25 (151 aa).

Residues 1–22 (MNLWLLVCLVASLMGAWSTVHT) form the signal peptide. Intrachain disulfides connect C29–C57 and C30–C73. The disordered stretch occupies residues 94 to 151 (THSKQHLGSRRNLQDSHLGGQRSNTGMSRLAHSKSKSSRSTRSNKKKTSFLNMANPGP). Basic residues predominate over residues 124-141 (AHSKSKSSRSTRSNKKKT).

This sequence belongs to the intercrine beta (chemokine CC) family.

Its subcellular location is the secreted. Potentially involved in T-cell development. Recombinant protein shows chemotactic activity on thymocytes, macrophages, THP-1 cells, and dendritics cells but is inactive on peripheral blood lymphocytes and neutrophils. Binds to CCR9. Binds to atypical chemokine receptor ACKR4 and mediates the recruitment of beta-arrestin (ARRB1/2) to ACKR4. This is C-C motif chemokine 25 (CCL25) from Canis lupus familiaris (Dog).